A 458-amino-acid chain; its full sequence is Argininosuccinate lyase (458 aa).

This sequence belongs to the lyase 1 family. Argininosuccinate lyase subfamily.

The protein resides in the cytoplasm. It carries out the reaction 2-(N(omega)-L-arginino)succinate = fumarate + L-arginine. Its pathway is amino-acid biosynthesis; L-arginine biosynthesis; L-arginine from L-ornithine and carbamoyl phosphate: step 3/3. This chain is Argininosuccinate lyase, found in Geotalea daltonii (strain DSM 22248 / JCM 15807 / FRC-32) (Geobacter daltonii).